Consider the following 119-residue polypeptide: Large ribosomal subunit protein uL18 (119 aa).

Belongs to the universal ribosomal protein uL18 family. In terms of assembly, part of the 50S ribosomal subunit; part of the 5S rRNA/L5/L18/L25 subcomplex. Contacts the 5S and 23S rRNAs.

This is one of the proteins that bind and probably mediate the attachment of the 5S RNA into the large ribosomal subunit, where it forms part of the central protuberance. The chain is Large ribosomal subunit protein uL18 from Malacoplasma penetrans (strain HF-2) (Mycoplasma penetrans).